We begin with the raw amino-acid sequence, 318 residues long: Methionyl-tRNA formyltransferase (318 aa).

117–120 (SLLP) lines the (6S)-5,6,7,8-tetrahydrofolate pocket.

The protein belongs to the Fmt family.

It catalyses the reaction L-methionyl-tRNA(fMet) + (6R)-10-formyltetrahydrofolate = N-formyl-L-methionyl-tRNA(fMet) + (6S)-5,6,7,8-tetrahydrofolate + H(+). Attaches a formyl group to the free amino group of methionyl-tRNA(fMet). The formyl group appears to play a dual role in the initiator identity of N-formylmethionyl-tRNA by promoting its recognition by IF2 and preventing the misappropriation of this tRNA by the elongation apparatus. This is Methionyl-tRNA formyltransferase from Malacoplasma penetrans (strain HF-2) (Mycoplasma penetrans).